The primary structure comprises 226 residues: MVKLGCSFSGKPGKEAGDQDGAAMDSVPLISPLDVSQLQPSFSDQVVINTQTEYQLTSADQPKKFADLEGQRLACSHSEEGRRLPTARMIAFAMALLGCVLIMYKAIWYDQFTCPDGFLLRHKICTPLTLEMYYTEMDPERHRSILAAIGAYPLSRKHGTEMPAVWGNNYRTAKEEHKGTTPAAMAVSTAAAAAAAEGTEPSGKSLDTREKEDPQKAEGVPSQPPK.

The disordered stretch occupies residues 1–21 (MVKLGCSFSGKPGKEAGDQDG). Topologically, residues 1 to 88 (MVKLGCSFSG…EEGRRLPTAR (88 aa)) are extracellular. A helical membrane pass occupies residues 89–109 (MIAFAMALLGCVLIMYKAIWY). Residues 110 to 226 (DQFTCPDGFL…AEGVPSQPPK (117 aa)) lie on the Cytoplasmic side of the membrane. The disordered stretch occupies residues 177–226 (HKGTTPAAMAVSTAAAAAAAEGTEPSGKSLDTREKEDPQKAEGVPSQPPK). Residues 183–196 (AAMAVSTAAAAAAA) show a composition bias toward low complexity. Basic and acidic residues predominate over residues 206-216 (LDTREKEDPQK).

Belongs to the NSG family. As to quaternary structure, interacts with CLTA. Most abundant in brain. Also expressed in testis and ovary and, at much lower levels, in kidney and heart.

The protein resides in the cytoplasmic vesicle membrane. It localises to the cell membrane. Functionally, interacts with clathrin light chain A and stimulates clathrin self-assembly and clathrin-mediated endocytosis. The protein is Neuron-specific vesicular protein calcyon (Caly) of Mus musculus (Mouse).